The sequence spans 388 residues: Calreticulin (388 aa).

An N-terminal signal peptide occupies residues 1-17 (MQLSLLVGLVCFSAINA). C103 and C135 are oxidised to a cystine. An alpha-D-glucoside contacts are provided by Y107, K109, Y126, and D133. 7 repeat units span residues 189 to 200 (AESGELEADWDF), 208 to 219 (DPDAKKPEDWDE), 225 to 236 (DEDDKKPEDWDK), 242 to 253 (DPDAKKPEDWDD), 257 to 267 (GEWEPPMVDNP), 271 to 281 (GEWKPKQKKNP), and 285 to 295 (GKWIHPEIEIP). The 4 X approximate repeats stretch occupies residues 189-253 (AESGELEADW…DAKKPEDWDD (65 aa)). The disordered stretch occupies residues 193-282 (ELEADWDFLP…WKPKQKKNPA (90 aa)). Basic and acidic residues predominate over residues 205–215 (KIKDPDAKKPE). Acidic residues predominate over residues 216 to 227 (DWDEREFIDDED). Residues 228–249 (DKKPEDWDKPEHIPDPDAKKPE) are compositionally biased toward basic and acidic residues. Positions 250 to 259 (DWDDEMDGEW) are enriched in acidic residues. A 3 X approximate repeats region spans residues 257–295 (GEWEPPMVDNPEYKGEWKPKQKKNPAYKGKWIHPEIEIP). An an alpha-D-glucoside-binding site is contributed by D315. The segment at 349–388 (REGEKKKGKKTKKQKKKEKNEKIKKEKMKKRKRANRKKKK) is disordered. 2 stretches are compositionally biased toward basic residues: residues 354–365 (KKGKKTKKQKKK) and 373–388 (KEKMKKRKRANRKKKK).

This sequence belongs to the calreticulin family.

It is found in the endoplasmic reticulum lumen. Functionally, molecular calcium-binding chaperone promoting folding, oligomeric assembly and quality control in the ER via the calreticulin/calnexin cycle. This lectin may interact transiently with almost all of the monoglucosylated glycoproteins that are synthesized in the ER. The sequence is that of Calreticulin (crt-1) from Onchocerca volvulus.